A 274-amino-acid chain; its full sequence is Diaminopimelate epimerase (274 aa).

Positions 11, 44, and 64 each coordinate substrate. The Proton donor role is filled by C73. Substrate contacts are provided by residues 74 to 75, N157, N190, and 208 to 209; these read GN and ER. C217 acts as the Proton acceptor in catalysis. 218–219 lines the substrate pocket; that stretch reads GS.

This sequence belongs to the diaminopimelate epimerase family. As to quaternary structure, homodimer.

Its subcellular location is the cytoplasm. It carries out the reaction (2S,6S)-2,6-diaminopimelate = meso-2,6-diaminopimelate. It participates in amino-acid biosynthesis; L-lysine biosynthesis via DAP pathway; DL-2,6-diaminopimelate from LL-2,6-diaminopimelate: step 1/1. Its function is as follows. Catalyzes the stereoinversion of LL-2,6-diaminopimelate (L,L-DAP) to meso-diaminopimelate (meso-DAP), a precursor of L-lysine and an essential component of the bacterial peptidoglycan. The polypeptide is Diaminopimelate epimerase (Shigella flexneri serotype 5b (strain 8401)).